A 535-amino-acid polypeptide reads, in one-letter code: Ribonuclease Y (535 aa).

Residues 4-24 traverse the membrane as a helical segment; sequence IILLIVSALIGLILGYALISI. The disordered stretch occupies residues 118–141; the sequence is ENLSSKEKVLDSKEQSLTDKSKHI. One can recognise a KH domain in the interval 225 to 285; the sequence is TITSVHLPDD…IRREIARMTL (61 aa). The 94-residue stretch at 351–444 folds into the HD domain; that stretch reads VLRHSVEVGK…VAAADALSSA (94 aa).

It belongs to the RNase Y family.

Its subcellular location is the cell membrane. Its function is as follows. Endoribonuclease that initiates mRNA decay. The chain is Ribonuclease Y from Streptococcus pyogenes serotype M18 (strain MGAS8232).